Consider the following 738-residue polypeptide: Phosphoribosylformylglycinamidine synthase subunit PurL (738 aa).

His-53 is an active-site residue. Residues Tyr-56 and Lys-95 each coordinate ATP. Residue Glu-97 coordinates Mg(2+). Substrate is bound by residues 98–101 (SHNH) and Arg-120. His-99 serves as the catalytic Proton acceptor. Mg(2+) is bound at residue Asp-121. Gln-244 lines the substrate pocket. Mg(2+) is bound at residue Asp-274. Residue 318 to 320 (ESQ) coordinates substrate. ATP-binding residues include Asp-499 and Gly-536. Asn-537 is a Mg(2+) binding site. Ser-539 lines the substrate pocket.

This sequence belongs to the FGAMS family. In terms of assembly, monomer. Part of the FGAM synthase complex composed of 1 PurL, 1 PurQ and 2 PurS subunits.

The protein resides in the cytoplasm. The catalysed reaction is N(2)-formyl-N(1)-(5-phospho-beta-D-ribosyl)glycinamide + L-glutamine + ATP + H2O = 2-formamido-N(1)-(5-O-phospho-beta-D-ribosyl)acetamidine + L-glutamate + ADP + phosphate + H(+). It participates in purine metabolism; IMP biosynthesis via de novo pathway; 5-amino-1-(5-phospho-D-ribosyl)imidazole from N(2)-formyl-N(1)-(5-phospho-D-ribosyl)glycinamide: step 1/2. Functionally, part of the phosphoribosylformylglycinamidine synthase complex involved in the purines biosynthetic pathway. Catalyzes the ATP-dependent conversion of formylglycinamide ribonucleotide (FGAR) and glutamine to yield formylglycinamidine ribonucleotide (FGAM) and glutamate. The FGAM synthase complex is composed of three subunits. PurQ produces an ammonia molecule by converting glutamine to glutamate. PurL transfers the ammonia molecule to FGAR to form FGAM in an ATP-dependent manner. PurS interacts with PurQ and PurL and is thought to assist in the transfer of the ammonia molecule from PurQ to PurL. The sequence is that of Phosphoribosylformylglycinamidine synthase subunit PurL from Lacticaseibacillus paracasei (strain ATCC 334 / BCRC 17002 / CCUG 31169 / CIP 107868 / KCTC 3260 / NRRL B-441) (Lactobacillus paracasei).